We begin with the raw amino-acid sequence, 282 residues long: Glycine betaine transport system permease protein OpuAB (282 aa).

Residues 1–18 (MDRLPRIPLADIIDRFVD) are Extracellular-facing. Residues 19–39 (WITMTFGGFFDGIANGLAAFV) traverse the membrane as a helical segment. The Cytoplasmic portion of the chain corresponds to 40–44 (NGIVT). Residues 45 to 65 (GLGFIPSILLTIIFAALAWWI) form a helical membrane-spanning segment. Topologically, residues 66–69 (STRG) are extracellular. Residues 70–90 (IALFTLIGFLLIDYLGYWDPM) form a helical membrane-spanning segment. Residues 90–269 (MLQTLALVLT…IVAITLDRIT (180 aa)) form the ABC transmembrane type-1 domain. Residues 91–93 (LQT) lie on the Cytoplasmic side of the membrane. Residues 94-114 (LALVLTSVIISIVVGVPIGIW) traverse the membrane as a helical segment. Residues 115 to 137 (ASQKETVRRIVTPILDLMQTMPA) are Extracellular-facing. Residues 138-158 (FVYLLPAIFFFNIGVVPGVVA) traverse the membrane as a helical segment. Residues 159-215 (SVIFAMPPTIRMTVLGIKQVPADLIEATEAFGSTTAQRLFKVQLPLATKTILAGINQ) lie on the Cytoplasmic side of the membrane. Residues 216 to 236 (SIMLALSMVVIAAMVGAPGLG) form a helical membrane-spanning segment. At 237-242 (SEVYSA) the chain is on the extracellular side. A helical membrane pass occupies residues 243–263 (VTQLKTGVGVEAGIAIVIVAI). At 264 to 282 (TLDRITQNIKVKKKSRGNA) the chain is on the cytoplasmic side.

Belongs to the binding-protein-dependent transport system permease family. CysTW subfamily. As to quaternary structure, the complex is composed of two ATP-binding proteins (OpuAA), two transmembrane proteins (OpuAB) and a solute-binding protein (OpuAC).

The protein localises to the cell membrane. In terms of biological role, involved in a multicomponent binding-protein-dependent transport system for glycine betaine; probably responsible for the translocation of the substrate across the membrane. The chain is Glycine betaine transport system permease protein OpuAB (opuAB) from Bacillus subtilis (strain 168).